Reading from the N-terminus, the 432-residue chain is Homogentisate 1,2-dioxygenase (432 aa).

Positions 333, 339, and 369 each coordinate Fe cation.

It belongs to the homogentisate dioxygenase family. Fe cation serves as cofactor.

The enzyme catalyses homogentisate + O2 = 4-maleylacetoacetate + H(+). The protein operates within amino-acid degradation; L-phenylalanine degradation; acetoacetate and fumarate from L-phenylalanine: step 4/6. The chain is Homogentisate 1,2-dioxygenase (hgd) from Dictyostelium discoideum (Social amoeba).